The following is a 380-amino-acid chain: Cytochrome b (380 aa).

4 helical membrane passes run 33 to 53, 77 to 98, 113 to 133, and 178 to 198; these read FGSLLGVCLMIQIMTGLFLAM, WLIRYLHANGASMFFICLFIHV, WNIGIILFLTTMATAFVGYVL, and FFAFHFILPFIITALVLVHLL. Histidine 83 and histidine 97 together coordinate heme b. 2 residues coordinate heme b: histidine 182 and histidine 196. Residue histidine 201 participates in a ubiquinone binding. 4 helical membrane passes run 226–246, 288–308, 320–340, and 347–367; these read IKDLLGVLLLLMVLMILVLFF, LGGVLALILSILILAAFPFLN, ITQFLYWIFIANLLILTWIGG, and FTTIGQISSILYFTIIVVLMP.

This sequence belongs to the cytochrome b family. The cytochrome bc1 complex contains 11 subunits: 3 respiratory subunits (MT-CYB, CYC1 and UQCRFS1), 2 core proteins (UQCRC1 and UQCRC2) and 6 low-molecular weight proteins (UQCRH/QCR6, UQCRB/QCR7, UQCRQ/QCR8, UQCR10/QCR9, UQCR11/QCR10 and a cleavage product of UQCRFS1). This cytochrome bc1 complex then forms a dimer. Heme b is required as a cofactor.

It is found in the mitochondrion inner membrane. Functionally, component of the ubiquinol-cytochrome c reductase complex (complex III or cytochrome b-c1 complex) that is part of the mitochondrial respiratory chain. The b-c1 complex mediates electron transfer from ubiquinol to cytochrome c. Contributes to the generation of a proton gradient across the mitochondrial membrane that is then used for ATP synthesis. This Thomasomys ischyrus (Strong-tailed oldfield mouse) protein is Cytochrome b (MT-CYB).